The sequence spans 880 residues: Alanine--tRNA ligase (880 aa).

Zn(2+) is bound by residues histidine 565, histidine 569, cysteine 675, and histidine 679.

It belongs to the class-II aminoacyl-tRNA synthetase family. Zn(2+) is required as a cofactor.

It localises to the cytoplasm. The enzyme catalyses tRNA(Ala) + L-alanine + ATP = L-alanyl-tRNA(Ala) + AMP + diphosphate. Catalyzes the attachment of alanine to tRNA(Ala) in a two-step reaction: alanine is first activated by ATP to form Ala-AMP and then transferred to the acceptor end of tRNA(Ala). Also edits incorrectly charged Ser-tRNA(Ala) and Gly-tRNA(Ala) via its editing domain. The protein is Alanine--tRNA ligase of Granulibacter bethesdensis (strain ATCC BAA-1260 / CGDNIH1).